We begin with the raw amino-acid sequence, 245 residues long: Biosynthetic peptidoglycan transglycosylase (245 aa).

A helical transmembrane segment spans residues Val-20–Ala-42.

This sequence belongs to the glycosyltransferase 51 family.

The protein localises to the cell inner membrane. The catalysed reaction is [GlcNAc-(1-&gt;4)-Mur2Ac(oyl-L-Ala-gamma-D-Glu-L-Lys-D-Ala-D-Ala)](n)-di-trans,octa-cis-undecaprenyl diphosphate + beta-D-GlcNAc-(1-&gt;4)-Mur2Ac(oyl-L-Ala-gamma-D-Glu-L-Lys-D-Ala-D-Ala)-di-trans,octa-cis-undecaprenyl diphosphate = [GlcNAc-(1-&gt;4)-Mur2Ac(oyl-L-Ala-gamma-D-Glu-L-Lys-D-Ala-D-Ala)](n+1)-di-trans,octa-cis-undecaprenyl diphosphate + di-trans,octa-cis-undecaprenyl diphosphate + H(+). It functions in the pathway cell wall biogenesis; peptidoglycan biosynthesis. Its function is as follows. Peptidoglycan polymerase that catalyzes glycan chain elongation from lipid-linked precursors. The chain is Biosynthetic peptidoglycan transglycosylase from Burkholderia orbicola (strain MC0-3).